A 236-amino-acid polypeptide reads, in one-letter code: 2-C-methyl-D-erythritol 4-phosphate cytidylyltransferase (236 aa).

The protein belongs to the IspD/TarI cytidylyltransferase family. IspD subfamily.

The catalysed reaction is 2-C-methyl-D-erythritol 4-phosphate + CTP + H(+) = 4-CDP-2-C-methyl-D-erythritol + diphosphate. It participates in isoprenoid biosynthesis; isopentenyl diphosphate biosynthesis via DXP pathway; isopentenyl diphosphate from 1-deoxy-D-xylulose 5-phosphate: step 2/6. Catalyzes the formation of 4-diphosphocytidyl-2-C-methyl-D-erythritol from CTP and 2-C-methyl-D-erythritol 4-phosphate (MEP). The chain is 2-C-methyl-D-erythritol 4-phosphate cytidylyltransferase from Azoarcus sp. (strain BH72).